Reading from the N-terminus, the 86-residue chain is MAKLHFSLVAPERELFSGEVDMVQAPGAEGDFGVLANHAPFMTTLREGKVTVKDGATTKVFDIQGGFADVGPEGLTILAEHAVEAA.

This sequence belongs to the ATPase epsilon chain family. As to quaternary structure, F-type ATPases have 2 components, CF(1) - the catalytic core - and CF(0) - the membrane proton channel. CF(1) has five subunits: alpha(3), beta(3), gamma(1), delta(1), epsilon(1). CF(0) has three main subunits: a, b and c.

The protein resides in the cell inner membrane. In terms of biological role, produces ATP from ADP in the presence of a proton gradient across the membrane. The protein is ATP synthase epsilon chain (atpC) of Caulobacter vibrioides (strain ATCC 19089 / CIP 103742 / CB 15) (Caulobacter crescentus).